A 75-amino-acid polypeptide reads, in one-letter code: Putative defensin-like protein 126 (75 aa).

The signal sequence occupies residues 1 to 24; that stretch reads MSKSTFLFVYIILILGSMVNEIQG. Disulfide bonds link cysteine 29–cysteine 73, cysteine 38–cysteine 57, cysteine 43–cysteine 67, and cysteine 47–cysteine 69.

This sequence belongs to the DEFL family.

It localises to the secreted. The sequence is that of Putative defensin-like protein 126 (LCR6) from Arabidopsis thaliana (Mouse-ear cress).